The chain runs to 467 residues: tRNA modification GTPase MnmE (467 aa).

Residues R25, E87, and K130 each coordinate (6S)-5-formyl-5,6,7,8-tetrahydrofolate. In terms of domain architecture, TrmE-type G spans 226-389 (GLSVVLAGQP…LRGELLRIAG (164 aa)). N236 provides a ligand contact to K(+). Residues 236–241 (NVGKSS), 255–261 (TPIAGTT), and 280–283 (DTAG) each bind GTP. S240 is a Mg(2+) binding site. Residues T255, I257, and T260 each coordinate K(+). T261 lines the Mg(2+) pocket. A (6S)-5-formyl-5,6,7,8-tetrahydrofolate-binding site is contributed by K467.

The protein belongs to the TRAFAC class TrmE-Era-EngA-EngB-Septin-like GTPase superfamily. TrmE GTPase family. As to quaternary structure, homodimer. Heterotetramer of two MnmE and two MnmG subunits. Requires K(+) as cofactor.

It is found in the cytoplasm. In terms of biological role, exhibits a very high intrinsic GTPase hydrolysis rate. Involved in the addition of a carboxymethylaminomethyl (cmnm) group at the wobble position (U34) of certain tRNAs, forming tRNA-cmnm(5)s(2)U34. The chain is tRNA modification GTPase MnmE from Burkholderia thailandensis (strain ATCC 700388 / DSM 13276 / CCUG 48851 / CIP 106301 / E264).